We begin with the raw amino-acid sequence, 269 residues long: MAEVPELASEMMAYYSGNEDDLFFEVDGPKQMKCSFQDLDLCPLDGGIQLQISHEHYNKGFRQAVSVVVAMEKLRKMLVPCPQIFQDNDLSTLIPFIFEEEPVFLDTRNNDACVHDAPVRSLHCTLRDAQLKSLVMSGPYELKALHLQGQDLEQQVVFFMSFVQGEESNDKIPVALGLKAKNLYLSCVLKDDKPTLQLESVDPKNYPKKKMEKRFVFNKIEINNKLEFESAQFPNWYISTSQAENMPVFLGGTRGGQDITDFTMQFVSS.

A propeptide spanning residues 1–116 (MAEVPELASE…TRNNDACVHD (116 aa)) is cleaved from the precursor.

Belongs to the IL-1 family. As to quaternary structure, monomer. In its precursor form, weakly interacts with full-length MEFV; the mature cytokine does not interact at all. Interacts with integrins ITGAV:ITGBV and ITGA5:ITGB1; integrin-binding is required for IL1B signaling. Interacts with cargo receptor TMED10; the interaction is direct and is required for the secretion of IL1B mature form. Interacts with HSP90AB1; the interaction facilitates cargo translocation into the ERGIC. Interacts with HSP90B1; the interaction facilitates cargo translocation into the ERGIC.

It is found in the cytoplasm. Its subcellular location is the cytosol. It localises to the secreted. The protein resides in the lysosome. The protein localises to the extracellular exosome. In terms of biological role, potent pro-inflammatory cytokine. Initially discovered as the major endogenous pyrogen, induces prostaglandin synthesis, neutrophil influx and activation, T-cell activation and cytokine production, B-cell activation and antibody production, and fibroblast proliferation and collagen production. Promotes Th17 differentiation of T-cells. Synergizes with IL12/interleukin-12 to induce IFNG synthesis from T-helper 1 (Th1) cells. Plays a role in angiogenesis by inducing VEGF production synergistically with TNF and IL6. Involved in transduction of inflammation downstream of pyroptosis: its mature form is specifically released in the extracellular milieu by passing through the gasdermin-D (GSDMD) pore. This is Interleukin-1 beta (IL1B) from Macaca nemestrina (Pig-tailed macaque).